A 205-amino-acid chain; its full sequence is IQ domain-containing protein F1 (205 aa).

Composition is skewed to basic and acidic residues over residues 1–24 (MEEK…KEMP) and 51–68 (ANEK…LSDK). The tract at residues 1–68 (MEEKQPQKTK…PENQKKLSDK (68 aa)) is disordered. IQ domains follow at residues 68–97 (KDTV…SACI) and 124–153 (KEWA…AVRI).

Interacts with calmodulin.

Its subcellular location is the cytoplasmic vesicle. It is found in the secretory vesicle. It localises to the acrosome. Its function is as follows. Involved in sperm capacitation and acrosome reaction. This chain is IQ domain-containing protein F1, found in Homo sapiens (Human).